A 159-amino-acid chain; its full sequence is 18.0 kDa class I heat shock protein (159 aa).

Residues 45–159 (ETAAFANTHI…PEVKSIHISG (115 aa)) enclose the sHSP domain.

This sequence belongs to the small heat shock protein (HSP20) family. Forms oligomeric structures.

It localises to the cytoplasm. In Daucus carota (Wild carrot), this protein is 18.0 kDa class I heat shock protein.